The chain runs to 407 residues: Arginine deiminase (407 aa).

The active-site Amidino-cysteine intermediate is the Cys397.

It belongs to the arginine deiminase family.

It localises to the cytoplasm. It catalyses the reaction L-arginine + H2O = L-citrulline + NH4(+). The protein operates within amino-acid degradation; L-arginine degradation via ADI pathway; carbamoyl phosphate from L-arginine: step 1/2. In Escherichia coli O6:H1 (strain CFT073 / ATCC 700928 / UPEC), this protein is Arginine deiminase (arcA).